A 703-amino-acid chain; its full sequence is Elongation factor G (703 aa).

The region spanning 9–292 (ERTRNIGIMA…AVVDYLPGPL (284 aa)) is the tr-type G domain. GTP contacts are provided by residues 18–25 (AHIDAGKT), 91–95 (DTPGH), and 145–148 (NKMD).

The protein belongs to the TRAFAC class translation factor GTPase superfamily. Classic translation factor GTPase family. EF-G/EF-2 subfamily.

Its subcellular location is the cytoplasm. Its function is as follows. Catalyzes the GTP-dependent ribosomal translocation step during translation elongation. During this step, the ribosome changes from the pre-translocational (PRE) to the post-translocational (POST) state as the newly formed A-site-bound peptidyl-tRNA and P-site-bound deacylated tRNA move to the P and E sites, respectively. Catalyzes the coordinated movement of the two tRNA molecules, the mRNA and conformational changes in the ribosome. The sequence is that of Elongation factor G from Leuconostoc citreum (strain KM20).